The primary structure comprises 68 residues: Large ribosomal subunit protein uL29 (68 aa).

This sequence belongs to the universal ribosomal protein uL29 family.

This Pyrococcus abyssi (strain GE5 / Orsay) protein is Large ribosomal subunit protein uL29 (rpl29).